A 187-amino-acid chain; its full sequence is Large ribosomal subunit protein bL9 (187 aa).

Positions 168–187 are disordered; the sequence is EEAPAEEDVAAEETSEAAEA.

The protein belongs to the bacterial ribosomal protein bL9 family.

Binds to the 23S rRNA. The chain is Large ribosomal subunit protein bL9 from Paramagnetospirillum magneticum (strain ATCC 700264 / AMB-1) (Magnetospirillum magneticum).